Here is a 343-residue protein sequence, read N- to C-terminus: Ribosomal RNA small subunit methyltransferase C (343 aa).

It belongs to the methyltransferase superfamily. RsmC family. In terms of assembly, monomer.

It is found in the cytoplasm. The enzyme catalyses guanosine(1207) in 16S rRNA + S-adenosyl-L-methionine = N(2)-methylguanosine(1207) in 16S rRNA + S-adenosyl-L-homocysteine + H(+). Specifically methylates the guanine in position 1207 of 16S rRNA in the 30S particle. The polypeptide is Ribosomal RNA small subunit methyltransferase C (Shigella flexneri).